The primary structure comprises 298 residues: Type II methyltransferase M.MjaIV (298 aa).

The catalysed reaction is a 2'-deoxyadenosine in DNA + S-adenosyl-L-methionine = an N(6)-methyl-2'-deoxyadenosine in DNA + S-adenosyl-L-homocysteine + H(+). In terms of biological role, a methylase that recognizes the double-stranded sequence 5'-GTNNAC-3', methylates A-5 on both strands, and protects the DNA from cleavage by the MjaIV endonuclease. The sequence is that of Type II methyltransferase M.MjaIV (mjaIVMP) from Methanocaldococcus jannaschii (strain ATCC 43067 / DSM 2661 / JAL-1 / JCM 10045 / NBRC 100440) (Methanococcus jannaschii).